The primary structure comprises 501 residues: Acetylcholine receptor subunit beta (501 aa).

A signal peptide spans 1 to 23 (MTPGALLMLLGALGAPLAPGVRG). At 24-244 (SEAEGRLREK…VIFYLIIRRK (221 aa)) the chain is on the extracellular side. An intrachain disulfide couples C151 to C165. N-linked (GlcNAc...) asparagine glycosylation occurs at N164. 3 consecutive transmembrane segments (helical) span residues 245–269 (PLFY…VFYL), 277–295 (MGLS…LLLA), and 311–332 (YLMF…VLNL). Topologically, residues 333–469 (HHRSPHTHQM…WQFVAMVVDR (137 aa)) are cytoplasmic. Y390 bears the Phosphotyrosine; by Tyr-kinases mark. The chain crosses the membrane as a helical span at residues 470-488 (LFLWTFIIFTSVGTLVIFL).

The protein belongs to the ligand-gated ion channel (TC 1.A.9) family. Acetylcholine receptor (TC 1.A.9.1) subfamily. Beta-1/CHRNB1 sub-subfamily. As to quaternary structure, pentamer of two alpha chains, and one each of the beta, delta, and gamma (in immature muscle) or epsilon (in mature muscle) chains. The muscle heteropentamer composed of alpha-1, beta-1, delta, epsilon subunits interacts with the alpha-conotoxin ImII.

It is found in the postsynaptic cell membrane. Its subcellular location is the cell membrane. It carries out the reaction K(+)(in) = K(+)(out). It catalyses the reaction Na(+)(in) = Na(+)(out). In terms of biological role, after binding acetylcholine, the AChR responds by an extensive change in conformation that affects all subunits and leads to opening of an ion-conducting channel across the plasma membrane. This chain is Acetylcholine receptor subunit beta, found in Homo sapiens (Human).